Here is a 157-residue protein sequence, read N- to C-terminus: Crossover junction endodeoxyribonuclease RuvC (157 aa).

Residues Asp7, Glu66, and Asp139 contribute to the active site. 3 residues coordinate Mg(2+): Asp7, Glu66, and Asp139.

This sequence belongs to the RuvC family. Homodimer which binds Holliday junction (HJ) DNA. The HJ becomes 2-fold symmetrical on binding to RuvC with unstacked arms; it has a different conformation from HJ DNA in complex with RuvA. In the full resolvosome a probable DNA-RuvA(4)-RuvB(12)-RuvC(2) complex forms which resolves the HJ. The cofactor is Mg(2+).

The protein resides in the cytoplasm. The enzyme catalyses Endonucleolytic cleavage at a junction such as a reciprocal single-stranded crossover between two homologous DNA duplexes (Holliday junction).. In terms of biological role, the RuvA-RuvB-RuvC complex processes Holliday junction (HJ) DNA during genetic recombination and DNA repair. Endonuclease that resolves HJ intermediates. Cleaves cruciform DNA by making single-stranded nicks across the HJ at symmetrical positions within the homologous arms, yielding a 5'-phosphate and a 3'-hydroxyl group; requires a central core of homology in the junction. The consensus cleavage sequence is 5'-(A/T)TT(C/G)-3'. Cleavage occurs on the 3'-side of the TT dinucleotide at the point of strand exchange. HJ branch migration catalyzed by RuvA-RuvB allows RuvC to scan DNA until it finds its consensus sequence, where it cleaves and resolves the cruciform DNA. This is Crossover junction endodeoxyribonuclease RuvC from Helicobacter pylori (strain Shi470).